Reading from the N-terminus, the 108-residue chain is Parvalbumin beta (108 aa).

EF-hand domains follow at residues 38–73 (KSTD…FSST) and 77–108 (LTAA…LVKA). Residues D51, D53, S55, F57, E59, E62, D90, D92, D94, K96, and E101 each contribute to the Ca(2+) site.

Belongs to the parvalbumin family.

In muscle, parvalbumin is thought to be involved in relaxation after contraction. It binds two calcium ions. The protein is Parvalbumin beta of Graptemys geographica (Common map turtle).